Here is a 202-residue protein sequence, read N- to C-terminus: T-cell surface glycoprotein CD3 epsilon chain (202 aa).

Positions methionine 1 to glycine 21 are cleaved as a signal peptide. The Extracellular segment spans residues glutamine 22–leucine 122. In terms of domain architecture, Ig-like spans proline 37 to leucine 107. Cysteines 54 and 96 form a disulfide. Residues methionine 123 to valine 143 traverse the membrane as a helical segment. The Cytoplasmic portion of the chain corresponds to tyrosine 144–isoleucine 202. The interval proline 156–isoleucine 202 is disordered. Residues glutamine 170–arginine 187 form an NUMB-binding region region. The ITAM domain occupies glutamate 173–arginine 200. Residues lysine 174–proline 181 are proline-rich sequence. Phosphotyrosine is present on residues tyrosine 183 and tyrosine 194. A compositionally biased stretch (polar residues) spans aspartate 192 to isoleucine 202.

The TCR-CD3 complex is composed of a CD3D/CD3E and a CD3G/CD3E heterodimers that preferentially associate with TCRalpha and TCRbeta, respectively, to form TCRalpha/CD3E/CD3G and TCRbeta/CD3G/CD3E trimers. In turn, the hexamer interacts with CD3Z homodimer to form the TCR-CD3 complex. Alternatively, TCRalpha and TCRbeta can be replaced by TCRgamma and TCRdelta. Interacts with CD6. Interacts (via Proline-rich sequence) with NCK1; the interaction is ligand dependent but independent of tyrosine kinase activation. Phosphorylated on Tyr residues after T-cell receptor triggering by LCK in association with CD4/CD8.

Its subcellular location is the cell membrane. Functionally, part of the TCR-CD3 complex present on T-lymphocyte cell surface that plays an essential role in adaptive immune response. When antigen presenting cells (APCs) activate T-cell receptor (TCR), TCR-mediated signals are transmitted across the cell membrane by the CD3 chains CD3D, CD3E, CD3G and CD3Z. All CD3 chains contain immunoreceptor tyrosine-based activation motifs (ITAMs) in their cytoplasmic domain. Upon TCR engagement, these motifs become phosphorylated by Src family protein tyrosine kinases LCK and FYN, resulting in the activation of downstream signaling pathways. In addition of this role of signal transduction in T-cell activation, CD3E plays an essential role in correct T-cell development. Also participates in internalization and cell surface down-regulation of TCR-CD3 complexes via endocytosis sequences present in CD3E cytosolic region. In addition to its role as a TCR coreceptor, it serves as a receptor for ITPRIPL1. Ligand recognition inhibits T-cell activation by promoting interaction with NCK1, which prevents CD3E-ZAP70 interaction and blocks the ERK-NFkB signaling cascade and calcium influx. This Canis lupus familiaris (Dog) protein is T-cell surface glycoprotein CD3 epsilon chain (CD3E).